Reading from the N-terminus, the 357-residue chain is Protein Wnt-8c (357 aa).

Positions 1–16 (MRGSTFLLLSIVGIYG) are cleaved as a signal peptide. The cysteines at positions 55 and 66 are disulfide-linked. Asparagine 104 carries N-linked (GlcNAc...) asparagine glycosylation. 9 disulfides stabilise this stretch: cysteine 105-cysteine 113, cysteine 115-cysteine 133, cysteine 181-cysteine 195, cysteine 183-cysteine 190, cysteine 260-cysteine 298, cysteine 276-cysteine 291, cysteine 313-cysteine 328, cysteine 315-cysteine 325, and cysteine 320-cysteine 321. A lipid anchor (O-palmitoleoyl serine) is attached at serine 187. Asparagine 263 and asparagine 282 each carry an N-linked (GlcNAc...) asparagine glycan. The N-linked (GlcNAc...) asparagine glycan is linked to asparagine 346.

This sequence belongs to the Wnt family. Post-translationally, palmitoleoylation is required for efficient binding to frizzled receptors. Depalmitoleoylation leads to Wnt signaling pathway inhibition. In terms of processing, proteolytic processing by tiki1 and tiki2 promotes oxidation and formation of large disulfide-bond oligomers, leading to inactivation of wnt8c. As to expression, cells that form rhombomere 4. Hensen node and the neural plate immediately anterior to it.

The protein resides in the secreted. It localises to the extracellular space. Its subcellular location is the extracellular matrix. In terms of biological role, ligand for members of the frizzled family of seven transmembrane receptors. Probable developmental protein. Is likely to signal over only few cell diameters. May be involved in the regulation of axis formation and in the rhombomere specification. The sequence is that of Protein Wnt-8c (WNT8C) from Gallus gallus (Chicken).